Reading from the N-terminus, the 616-residue chain is 2-isopropylmalate synthase (616 aa).

A disordered region spans residues 1-34 (MSPNDAFISAPAKIETPVGPRNEGQPAWNKQRGS). Positions 67–341 (PQWCAVDLRD…DPQLDFTDIR (275 aa)) constitute a Pyruvate carboxyltransferase domain. 4 residues coordinate Mg(2+): D76, H280, H282, and N316. The tract at residues 490-616 (RTAPVEQIAL…NHEAVLAGGV (127 aa)) is regulatory domain.

It belongs to the alpha-IPM synthase/homocitrate synthase family. LeuA type 2 subfamily. In terms of assembly, homodimer. Mg(2+) serves as cofactor.

Its subcellular location is the cytoplasm. It carries out the reaction 3-methyl-2-oxobutanoate + acetyl-CoA + H2O = (2S)-2-isopropylmalate + CoA + H(+). It participates in amino-acid biosynthesis; L-leucine biosynthesis; L-leucine from 3-methyl-2-oxobutanoate: step 1/4. Its activity is regulated as follows. Inhibited by L-leucine, the pathway end product. Functionally, catalyzes the condensation of the acetyl group of acetyl-CoA with 3-methyl-2-oxobutanoate (2-ketoisovalerate) to form 3-carboxy-3-hydroxy-4-methylpentanoate (2-isopropylmalate). Complements an E.coli leuA deletion. In Corynebacterium glutamicum (strain ATCC 13032 / DSM 20300 / JCM 1318 / BCRC 11384 / CCUG 27702 / LMG 3730 / NBRC 12168 / NCIMB 10025 / NRRL B-2784 / 534), this protein is 2-isopropylmalate synthase.